A 269-amino-acid chain; its full sequence is MAEVPELASEMMAYYSGNEDDLFFDVDGPKQMKCSFQDLDLCPLGGGIQLQISHEHYNEGFRQAVSVVVAMEKLRKMLVPCPQIFQDNDLSTLIPFIFEEEPVFLDTRNNDACVHDAPVRSLHCTLRDAQLKSLVMSGPYELKALHLQGQDLEQQVVFSMSFVQGEESNDKIPVALGLKAKNLYLSCVLKDDKPTLQLESVDPKNYPKKKMEKRFVFNKIEINNKLEFESAQFPNWYISTSQAENMPVFLGGTRGGQDITDFTMQFVSS.

Positions 1–116 (MAEVPELASE…TRNNDACVHD (116 aa)) are excised as a propeptide.

It belongs to the IL-1 family. In terms of assembly, monomer. In its precursor form, weakly interacts with full-length MEFV; the mature cytokine does not interact at all. Interacts with integrins ITGAV:ITGBV and ITGA5:ITGB1; integrin-binding is required for IL1B signaling. Interacts with cargo receptor TMED10; the interaction is direct and is required for the secretion of IL1B mature form. Interacts with HSP90AB1; the interaction facilitates cargo translocation into the ERGIC. Interacts with HSP90B1; the interaction facilitates cargo translocation into the ERGIC.

The protein localises to the cytoplasm. It is found in the cytosol. The protein resides in the secreted. Its subcellular location is the lysosome. It localises to the extracellular exosome. In terms of biological role, potent pro-inflammatory cytokine. Initially discovered as the major endogenous pyrogen, induces prostaglandin synthesis, neutrophil influx and activation, T-cell activation and cytokine production, B-cell activation and antibody production, and fibroblast proliferation and collagen production. Promotes Th17 differentiation of T-cells. Synergizes with IL12/interleukin-12 to induce IFNG synthesis from T-helper 1 (Th1) cells. Plays a role in angiogenesis by inducing VEGF production synergistically with TNF and IL6. Involved in transduction of inflammation downstream of pyroptosis: its mature form is specifically released in the extracellular milieu by passing through the gasdermin-D (GSDMD) pore. The protein is Interleukin-1 beta (IL1B) of Macaca mulatta (Rhesus macaque).